The sequence spans 146 residues: Large ribosomal subunit protein bL9 (146 aa).

It belongs to the bacterial ribosomal protein bL9 family.

Binds to the 23S rRNA. This is Large ribosomal subunit protein bL9 from Symbiobacterium thermophilum (strain DSM 24528 / JCM 14929 / IAM 14863 / T).